A 448-amino-acid polypeptide reads, in one-letter code: UDP-N-acetylmuramoyl-L-alanine--L-glutamate ligase (448 aa).

An ATP-binding site is contributed by Gly118–Thr124.

The protein belongs to the MurCDEF family. MurD2 subfamily.

The protein resides in the cytoplasm. It catalyses the reaction UDP-N-acetyl-alpha-D-muramoyl-L-alanine + L-glutamate + ATP = UDP-N-acetyl-alpha-D-muramoyl-L-alanyl-L-glutamate + ADP + phosphate + H(+). It functions in the pathway cell wall biogenesis; peptidoglycan biosynthesis. In terms of biological role, cell wall formation. Catalyzes the addition of L-glutamate to the nucleotide precursor UDP-N-acetylmuramoyl-L-alanine. This Salinispora tropica (strain ATCC BAA-916 / DSM 44818 / JCM 13857 / NBRC 105044 / CNB-440) protein is UDP-N-acetylmuramoyl-L-alanine--L-glutamate ligase.